The following is a 416-amino-acid chain: MTKNSSLLAEFPTCPRDEKDRPRVFTAASGAWLTDESGFRWIDFDNARGSILLGHGDPVVAEAVARAATGADGTATGWSRRVDAVLERLHALCGGEVVGLFRSGTAAVRAAVLAVREATGRPLLLSAGYHGYDPMWYPSEAPLEPNADGVVDFFFDLGLLRELLRAPERVAAVVVSPDHMHLSPGWYRELRRLCSAAGVVLVADEVKVGLRYAPGLSTAELLAPDVWVVAKGMANGHAVSAVGGSRRLLKPLKEVSFTSFFEPTILAAADAALARVATGEPQRAVREAGDRFLRHARKALDDASLPVEIAGDGTFFQFVPATEELEEALYGAANAEGLLFYAGDNQGVSAAFDEAVLGEAERRFARVCERLAPYAGGEPVGDAARYRVAWNVMDGLRQAPRDREETTGLLARLLDD.

K231 is modified (N6-(pyridoxal phosphate)lysine).

The protein belongs to the class-III pyridoxal-phosphate-dependent aminotransferase family. The cofactor is pyridoxal 5'-phosphate.

The enzyme catalyses neomycin C + 2-oxoglutarate = 6'''-deamino-6'''-oxoneomycin C + L-glutamate. It catalyses the reaction neamine + 2-oxoglutarate = 6'-oxoparomamine + L-glutamate. It participates in antibiotic biosynthesis; neomycin biosynthesis. Functionally, 6'-oxoglucosaminyl:L-glutamate aminotransferase that catalyzes pyridoxal-5'-phosphate-mediated transamination for the conversion of paromamine to neamine in the biosynthetic pathway of neomycin. Also able to catalyze deamination at C-6''' of neomycin. This chain is Neamine transaminase NeoN (neoN), found in Streptomyces fradiae (Streptomyces roseoflavus).